A 577-amino-acid chain; its full sequence is Thrombomodulin (577 aa).

The signal sequence occupies residues 1-16; the sequence is MLGIFFLGVLAPASLG. The Extracellular portion of the chain corresponds to 17–517; the sequence is LSALAKLQPT…GPPSARPVHS (501 aa). The 137-residue stretch at 31 to 167 folds into the C-type lectin domain; it reads VEHECFALFQ…TETQGFLCEF (137 aa). Asn-113 carries an N-linked (GlcNAc...) asparagine glycan. Cys-135 and Cys-156 form a disulfide bridge. 2 EGF-like domains span residues 240–280 and 283–323; these read GAWN…RSCA and VVQS…HRCE. An N-linked (GlcNAc...) asparagine glycan is attached at Asn-243. Intrachain disulfides connect Cys-244-Cys-255, Cys-251-Cys-264, Cys-266-Cys-279, Cys-287-Cys-295, Cys-291-Cys-307, Cys-309-Cys-322, Cys-328-Cys-339, Cys-335-Cys-348, Cys-350-Cys-361, Cys-368-Cys-377, Cys-373-Cys-387, Cys-389-Cys-403, Cys-407-Cys-416, Cys-412-Cys-424, Cys-426-Cys-438, Cys-444-Cys-454, Cys-449-Cys-463, and Cys-465-Cys-479. A glycan (N-linked (GlcNAc...) asparagine) is linked at Asn-256. An EGF-like 3; calcium-binding domain is found at 324-362; the sequence is DVDDCKQGPNPCPQLCVNTKGGFECFCYDGYELVDGECV. EGF-like domains are found at residues 364–404 and 403–439; these read LLDP…HKCE and CEMF…SVCT. Residue Asn-408 is glycosylated (N-linked (GlcNAc...) asparagine). An EGF-like 6; calcium-binding domain is found at 440-480; the sequence is DIDECSQGECFTSECRNFPGSYECICGPDTALAGQISKDCD. The segment at 476–513 is disordered; sequence SKDCDPIPVREDTKEEEGSGEPPVSPTPGSPTGPPSAR. Over residues 477–492 the composition is skewed to basic and acidic residues; it reads KDCDPIPVREDTKEEE. An O-linked (Xyl...) (chondroitin sulfate) serine glycan is attached at Ser-494. Residues 498–512 are compositionally biased toward pro residues; it reads PVSPTPGSPTGPPSA. A helical membrane pass occupies residues 518–541; sequence GVLIGISIASLSLVVALLALLCHL. Residues 542–577 lie on the Cytoplasmic side of the membrane; sequence RKKQGAARAELEYKCASSAKEVVLQHVRTDRTLQKF.

Interacts with ITGAL, ITGAM and ITGB2. Interacts with thrombin/F2; this interaction switches the specificity of thrombin from a procoagulant to an anticoagulant and antifibrinolytic protease. Interacts with ANGP1 and ANGP2; these interactions significantly inhibit the generation of activated PC and TAFIa/CPB2 by the thrombin/thrombomodulin complex. Interacts with PF4; this interaction enhances generation of activated protein C. Interacts with HMGB1; this interaction inhibits HMGB1 inflammatory activity. In terms of tissue distribution, endothelial cells are unique in synthesizing thrombomodulin.

The protein resides in the membrane. Its function is as follows. Endothelial cell receptor that plays a critical role in regulating several physiological processes including hemostasis, coagulation, fibrinolysis, inflammation, and angiogenesis. Acts as a cofactor for thrombin activation of protein C/PROC on the surface of vascular endothelial cells leading to initiation of the activated protein C anticoagulant pathway. Also accelerates the activation of the plasma carboxypeptidase B2/CPB2, which catalyzes removal of C-terminal basic amino acids from its substrates including kinins or anaphylatoxins leading to fibrinolysis inhibition. Plays critical protective roles in changing the cleavage specificity of protease-activated receptor 1/PAR1, inhibiting endothelial cell permeability and inflammation. Suppresses inflammation distinctly from its anticoagulant cofactor activity by sequestering HMGB1 thereby preventing it from engaging cellular receptors such as RAGE and contributing to the inflammatory response. The sequence is that of Thrombomodulin (Thbd) from Mus musculus (Mouse).